The sequence spans 963 residues: Non-ribosomal peptide synthetase CmlP (963 aa).

The Carrier domain occupies 492–568 (GEDAAELRRV…AAFLRHLRGE (77 aa)). Ser526 is modified (O-(pantetheine 4'-phosphoryl)serine). The disordered stretch occupies residues 928-963 (GRLLGTPPDTPAGDRPERTGTTAEAQNGAAHAPTPR).

It belongs to the ATP-dependent AMP-binding enzyme family. Pantetheine 4'-phosphate is required as a cofactor.

It catalyses the reaction 4-amino-L-phenylalanine + holo-[peptidyl-carrier protein] + ATP = 4-amino-L-phenylalanyl-[peptidyl-carrier protein] + AMP + diphosphate. Its pathway is antibiotic biosynthesis. Functionally, involved in chloramphenicol biosynthesis. Activates 4-amino-L-phenylalanine by adenylation and loads it onto its peptidyl carrier domain, via a thioester linkage to the phosphopanthetheine moiety. Can also adenylate tyrosine and phenylalanine at low rates, but not L-p-nitrophenylalanine or threo-phenylserine. The protein is Non-ribosomal peptide synthetase CmlP of Streptomyces venezuelae (strain ATCC 10712 / CBS 650.69 / DSM 40230 / JCM 4526 / NBRC 13096 / PD 04745).